Consider the following 323-residue polypeptide: DNA-directed RNA polymerase subunit alpha (323 aa).

Positions 1–225 are alpha N-terminal domain (alpha-NTD); the sequence is MLDIAMPKIE…QYSQTIADFN (225 aa). The alpha C-terminal domain (alpha-CTD) stretch occupies residues 246–323; sequence IYDTPIEELD…SHAARAEIEG (78 aa).

This sequence belongs to the RNA polymerase alpha chain family. Homodimer. The RNAP catalytic core consists of 2 alpha, 1 beta, 1 beta' and 1 omega subunit. When a sigma factor is associated with the core the holoenzyme is formed, which can initiate transcription.

It carries out the reaction RNA(n) + a ribonucleoside 5'-triphosphate = RNA(n+1) + diphosphate. Its function is as follows. DNA-dependent RNA polymerase catalyzes the transcription of DNA into RNA using the four ribonucleoside triphosphates as substrates. The polypeptide is DNA-directed RNA polymerase subunit alpha (Roseiflexus sp. (strain RS-1)).